The chain runs to 188 residues: MNNQSFNNFSQVNSNSSFFADKPKNLQNTNLEMTNGTNPPSSFSKQTPQKRQSFGTNTNFSKGNSSRGSTSNKRKVLSVSQILARVNQKKQRKLEQKKRKKPLKPIIPPKSFILLFKDKPEKYVYNRRIIDYKHCGLLQRYIGLGGKILPRRQTKLTAKQQRYVAKTIKSARIMGLLPFVTKERSFFR.

Residues 1–19 (MNNQSFNNFSQVNSNSSFF) show a composition bias toward low complexity. Residues 1–79 (MNNQSFNNFS…TSNKRKVLSV (79 aa)) form a disordered region. The span at 25 to 71 (NLQNTNLEMTNGTNPPSSFSKQTPQKRQSFGTNTNFSKGNSSRGSTS) shows a compositional bias: polar residues.

This sequence belongs to the bacterial ribosomal protein bS18 family. Part of the 30S ribosomal subunit.

The protein resides in the plastid. The protein localises to the chloroplast. The sequence is that of Small ribosomal subunit protein bS18c from Tetradesmus obliquus (Green alga).